Consider the following 1028-residue polypeptide: Receptor-type guanylate cyclase gcy-13 (1028 aa).

6 N-linked (GlcNAc...) asparagine glycosylation sites follow: N58, N156, N324, N337, N377, and N394. Residues 438-458 (IVVIVAVIIVLCCAAAAIAAF) traverse the membrane as a helical segment. The Cytoplasmic portion of the chain corresponds to 459–1028 (LVIKARRDEE…WLLGMKEESA (570 aa)). The interval 491-511 (ESHHSSRSLQSNSTTTTGTTG) is disordered. Low complexity predominate over residues 497 to 511 (RSLQSNSTTTTGTTG). The region spanning 499–770 (LQSNSTTTTG…DMVNKLMKNM (272 aa)) is the Protein kinase domain. Residues 786 to 817 (SVLEKHASSLEDEVQERMKELVEEKKKSDILL) adopt a coiled-coil conformation. The Guanylate cyclase domain maps to 844–974 (TIFFSDVVGF…DTVNTASRME (131 aa)).

This sequence belongs to the adenylyl cyclase class-4/guanylyl cyclase family. As to expression, expressed bilaterally in RIM interneurons.

The protein localises to the cell membrane. It catalyses the reaction GTP = 3',5'-cyclic GMP + diphosphate. Its function is as follows. Guanylate cyclase involved in the production of the second messenger cGMP. The sequence is that of Receptor-type guanylate cyclase gcy-13 from Caenorhabditis elegans.